The primary structure comprises 567 residues: Monodechloroaminopyrrolnitrin halogenase PrnC (567 aa).

It functions in the pathway antibiotic biosynthesis. Functionally, involved in the biosynthesis of the antifungal antibiotic pyrrolnitrin. Catalyzes the chlorination of monodechloroaminopyrrolnitrin (MDA) at the 3 position to form aminopyrrolnitrin (APRN). In Pseudomonas fluorescens, this protein is Monodechloroaminopyrrolnitrin halogenase PrnC (prnC).